We begin with the raw amino-acid sequence, 240 residues long: Izumo sperm-egg fusion protein 3 (240 aa).

A signal peptide spans 1–22; it reads MGDLWLLLLLPLSLAAFHGVKG. Over 23–176 the chain is Extracellular; sequence CLECDPKFIE…DDPKKAESRE (154 aa). A helical transmembrane segment spans residues 177–197; the sequence is IGLFLILLAEGVILGGVLLLF. At 198–240 the chain is on the cytoplasmic side; it reads HFCISHQRKMKAIRRSLKTYLEKKLEELMGIKDEKEKDFRGRE.

This sequence belongs to the Izumo family. In terms of assembly, monomer and homodimer.

The protein resides in the cell membrane. The protein is Izumo sperm-egg fusion protein 3 (IZUMO3) of Bos taurus (Bovine).